The following is a 648-amino-acid chain: DNA mismatch repair protein MutL (648 aa).

A disordered region spans residues 336–443; that stretch reads ERPFEPSSPQ…SGSAGESRAR (108 aa). The segment covering 370-381 has biased composition (polar residues); it reads SPESKTHSTWNE. Basic and acidic residues predominate over residues 383–410; it reads SRVDTSRAETSRESRIDSPLGERTRDIA.

It belongs to the DNA mismatch repair MutL/HexB family.

Its function is as follows. This protein is involved in the repair of mismatches in DNA. It is required for dam-dependent methyl-directed DNA mismatch repair. May act as a 'molecular matchmaker', a protein that promotes the formation of a stable complex between two or more DNA-binding proteins in an ATP-dependent manner without itself being part of a final effector complex. This is DNA mismatch repair protein MutL from Shewanella sp. (strain ANA-3).